Consider the following 191-residue polypeptide: Dephospho-CoA kinase (191 aa).

Residues 3–191 (AIGITGSYAS…NLIANLECRV (189 aa)) enclose the DPCK domain. 11-16 (ASGKTF) serves as a coordination point for ATP.

Belongs to the CoaE family.

Its subcellular location is the cytoplasm. The enzyme catalyses 3'-dephospho-CoA + ATP = ADP + CoA + H(+). It participates in cofactor biosynthesis; coenzyme A biosynthesis; CoA from (R)-pantothenate: step 5/5. Its function is as follows. Catalyzes the phosphorylation of the 3'-hydroxyl group of dephosphocoenzyme A to form coenzyme A. This is Dephospho-CoA kinase from Rickettsia bellii (strain RML369-C).